Reading from the N-terminus, the 142-residue chain is Succinate dehydrogenase subunit 6, mitochondrial (142 aa).

As to quaternary structure, component of complex II composed of eight subunits in plants: four classical SDH subunits SDH1, SDH2, SDH3 and SDH4 (a flavoprotein (FP), an iron-sulfur protein (IP), and a cytochrome b composed of a large and a small subunit.), as well as four subunits unknown in mitochondria from bacteria and heterotrophic eukaryotes.

The protein resides in the mitochondrion inner membrane. It functions in the pathway carbohydrate metabolism; tricarboxylic acid cycle. The polypeptide is Succinate dehydrogenase subunit 6, mitochondrial (Oryza sativa subsp. japonica (Rice)).